The sequence spans 210 residues: ATP-dependent Clp protease proteolytic subunit (210 aa).

The active-site Nucleophile is S107. The active site involves H132.

Belongs to the peptidase S14 family. Fourteen ClpP subunits assemble into 2 heptameric rings which stack back to back to give a disk-like structure with a central cavity, resembling the structure of eukaryotic proteasomes.

It localises to the cytoplasm. The catalysed reaction is Hydrolysis of proteins to small peptides in the presence of ATP and magnesium. alpha-casein is the usual test substrate. In the absence of ATP, only oligopeptides shorter than five residues are hydrolyzed (such as succinyl-Leu-Tyr-|-NHMec, and Leu-Tyr-Leu-|-Tyr-Trp, in which cleavage of the -Tyr-|-Leu- and -Tyr-|-Trp bonds also occurs).. Its function is as follows. Cleaves peptides in various proteins in a process that requires ATP hydrolysis. Has a chymotrypsin-like activity. Plays a major role in the degradation of misfolded proteins. This chain is ATP-dependent Clp protease proteolytic subunit, found in Cereibacter sphaeroides (strain ATCC 17025 / ATH 2.4.3) (Rhodobacter sphaeroides).